Consider the following 72-residue polypeptide: Small, acid-soluble spore protein C (72 aa).

It belongs to the alpha/beta-type SASP family.

In terms of biological role, SASP are bound to spore DNA. They are double-stranded DNA-binding proteins that cause DNA to change to an a-like conformation. They protect the DNA backbone from chemical and enzymatic cleavage and are thus involved in dormant spore's high resistance to UV light. The protein is Small, acid-soluble spore protein C (sspC) of Bacillus subtilis (strain 168).